Reading from the N-terminus, the 348-residue chain is Putative olfactory receptor 3A4 (348 aa).

The Extracellular segment spans residues M1–P28. Residue N8 is glycosylated (N-linked (GlcNAc...) asparagine). A helical membrane pass occupies residues I29–I52. The Cytoplasmic segment spans residues L53–S60. Residues P61–P82 form a helical membrane-spanning segment. Residues A83–E103 lie on the Extracellular side of the membrane. A disulfide bridge connects residues C100 and C192. The helical transmembrane segment at L104 to Y123 threads the bilayer. The Cytoplasmic portion of the chain corresponds to D124–I143. Residues Q144–T161 form a helical membrane-spanning segment. The Extracellular portion of the chain corresponds to Q162–G199. The helical transmembrane segment at Q200 to A222 threads the bilayer. Residues H223 to K239 lie on the Cytoplasmic side of the membrane. Residues A240–Y262 form a helical membrane-spanning segment. Residues T263 to K275 are Extracellular-facing. A helical transmembrane segment spans residues G276 to T295. The Cytoplasmic portion of the chain corresponds to S296 to L348.

Belongs to the G-protein coupled receptor 1 family.

It is found in the cell membrane. Functionally, odorant receptor. The chain is Putative olfactory receptor 3A4 (OR3A4P) from Homo sapiens (Human).